The primary structure comprises 849 residues: Dopamine receptor 2 (849 aa).

The Extracellular segment spans residues 1 to 39 (MEAGETWNVSLEWPPPSLDLSTITQTPSTIVGSGIPLNY). N-linked (GlcNAc...) asparagine glycosylation is present at asparagine 8. The helical transmembrane segment at 40-60 (AGLSLIVIPLITLLGNLLVII) threads the bilayer. Residues 61-70 (SVLRYRALQS) are Cytoplasmic-facing. A helical transmembrane segment spans residues 71–91 (AINFLILGLAVADLLVAIIVM). At 92-112 (PYAVYVYVTNGDWYLGNLMCD) the chain is on the extracellular side. Residues cysteine 111 and cysteine 190 are joined by a disulfide bond. The chain crosses the membrane as a helical span at residues 113 to 133 (IYMASDVCCSTASILLLAVIS). The Cytoplasmic portion of the chain corresponds to 134–155 (FDRYRAVSLPIQYSRQSQNVKR). Residues 156–176 (VWTLIAVIWLVSLTLASPMVF) form a helical membrane-spanning segment. The Extracellular segment spans residues 177–203 (GVNVRPPDANPYECRFYNAEFSILSSM). Residues 183 to 849 (PDANPYECRF…HHFSNKQAHV (667 aa)) are required for the interaction with gpa-14. A helical membrane pass occupies residues 204-224 (ISFVIPCFLVLFVYIRIIIAL). Over 225-759 (KKREKAAKMR…QRKEKRATKT (535 aa)) the chain is Cytoplasmic. The interval 450-515 (RRSSYADDSQ…NNSRTASITN (66 aa)) is disordered. Residues 457 to 470 (DSQPTSSQTSSGDG) show a composition bias toward low complexity. The span at 477-498 (GQKRFRNLSRNYSTKHHRKVVK) shows a compositional bias: basic residues. Residues 501–515 (RGNSRNNSRTASITN) show a composition bias toward polar residues. A helical transmembrane segment spans residues 760 to 780 (LGVVVGVFLVCWVPFFVINIL). The Extracellular segment spans residues 781–798 (NAVCILLNKDSCQVGYDL). Residues 799–819 (FFYCTWIGYMNSFMNPIIYTI) form a helical membrane-spanning segment. Over 820–849 (FNTEFRRAFKSIIFGRNSTRHHFSNKQAHV) the chain is Cytoplasmic.

This sequence belongs to the G-protein coupled receptor 1 family. Interacts (via C-terminus) with the G-alpha protein gpa-14; the interaction is direct. As to expression, expressed in all dopaminergic neurons. Expressed in neurons around the nerve ring and the posterior side of the body including PDE neurons. In hermaphrodites, expressed in the head and tail ganglia including in the RIA interneuron pair, and in a subset of sublateral interneurons and the PDA neuron in the tail. Expressed in cholinergic SIA neurons. Also expressed in the male tail. In males, expressed in the dorsal spicule protractor, ventral spicule protractor, dorsal spicule retractor and ventral spicule retractor muscles and the sensory post-cloacal sensilla B (PCB) neuron. In males, expressed in the sensory hook neurons HOA.

It is found in the cell membrane. Functionally, G-protein coupled receptor which binds to the neurotransmitter dopamine with high affinity leading to the activation of an associated G-protein and downstream signaling pathways. Couples to G-proteins to inhibit adenylate cyclase (AC) activity and cAMP production. Inhibits synaptic vesicle fusion to negatively regulate the release of dopamine at dopaminergic neuron synapses. Antagonizes octopamine signaling in response to food by promoting the dopamine-mediated suppression of crh-1/CREB1 transcription factor activation in cholinergic SIA neurons. This is most likely in association with the G(o)-alpha G-protein subunit goa-1. In association with the G-alpha protein gpa-14, modulates two types of learning behavior: touch habituation and chemosensory associative conditioning. May act partly via tsp-17 to negatively regulate dopamine reuptake transporter dat-1 activity. Plays a role in behavioral plasticity and regulates the decision-making process when conflicting alternatives are present. Promotes male mating behavior by antagonizing acetylcholine signaling to control the protrusions of copulatory spicules from the tail of males during hermaphrodite vulval location. Modulates unc-7 activity at gap junctions to promote inhibitory neuronal signaling transduction between chemosensory and mechanosensory neurons, and thus ensures spicule insertion attempts are confined to the hermaphrodite vulva during copulation. In terms of biological role, G-protein coupled receptor which binds to the neurotransmitter dopamine with high affinity leading to the activation of an associated G-protein and downstream signaling pathways. Couples to G-proteins to inhibit adenylate cyclase (AC) activity and cAMP production. This Caenorhabditis elegans protein is Dopamine receptor 2.